A 401-amino-acid chain; its full sequence is Large ribosomal subunit protein uL4 (401 aa).

Belongs to the universal ribosomal protein uL4 family.

This Drosophila melanogaster (Fruit fly) protein is Large ribosomal subunit protein uL4 (RpL4).